Consider the following 130-residue polypeptide: Small ribosomal subunit protein uS11 (130 aa).

It belongs to the universal ribosomal protein uS11 family. As to quaternary structure, part of the 30S ribosomal subunit. Interacts with proteins S7 and S18. Binds to IF-3.

Its function is as follows. Located on the platform of the 30S subunit, it bridges several disparate RNA helices of the 16S rRNA. Forms part of the Shine-Dalgarno cleft in the 70S ribosome. The protein is Small ribosomal subunit protein uS11 of Xanthomonas oryzae pv. oryzae (strain MAFF 311018).